The following is a 135-amino-acid chain: Interleukin-4 (135 aa).

The signal sequence occupies residues 1–24 (MGLTSQLIPALVCLLVCTSHFVHG). Disulfide bonds link Cys-27/Cys-135, Cys-48/Cys-85, and Cys-70/Cys-105. Residues Asn-62 and Asn-96 are each glycosylated (N-linked (GlcNAc...) asparagine).

It belongs to the IL-4/IL-13 family.

Its subcellular location is the secreted. Participates in at least several B-cell activation processes as well as of other cell types. It is a costimulator of DNA-synthesis. It induces the expression of class II MHC molecules on resting B-cells. It enhances both secretion and cell surface expression of IgE and IgG1. It also regulates the expression of the low affinity Fc receptor for IgE (CD23) on both lymphocytes and monocytes. Positively regulates IL31RA expression in macrophages. Stimulates autophagy in dendritic cells by interfering with mTORC1 signaling and through the induction of RUFY4. This is Interleukin-4 (IL4) from Capra hircus (Goat).